The chain runs to 3788 residues: Lysosomal-trafficking regulator (3788 aa).

Disordered regions lie at residues 148–180 (KSTH…TVVS) and 198–217 (EGHL…VLSD). S164 is modified (phosphoserine). Phosphothreonine is present on T165. S166 bears the Phosphoserine mark. The WD 1 repeat unit spans residues 662–700 (GPTSGLPSPSYRFQGILPSSGSEDLLWKWDALEAYQSFV). Disordered stretches follow at residues 1169–1196 (LGPG…FSEE), 1213–1240 (GYEA…EAEG), and 1482–1519 (ESAA…TESI). The segment covering 1213–1232 (GYEADSESNPEDVDTQDDGV) has biased composition (acidic residues). Residues S1503 and S1504 each carry the phosphoserine modification. The WD 2 repeat unit spans residues 1576 to 1620 (SQENIFFPSKWQHLVLTYIQHPQGKKNVHGEISIWVSGQRKTDVI). Phosphoserine occurs at positions 2099, 2118, 2203, 2207, and 2254. A disordered region spans residues 2177 to 2221 (ANGVSRGSPRFPRARVDHKDVGTEPRSDDDSPGDESYPRRPDNLK). Over residues 2190-2205 (ARVDHKDVGTEPRSDD) the composition is skewed to basic and acidic residues. Disordered regions lie at residues 2556 to 2581 (HDSE…SIAG) and 2659 to 2681 (NTSQ…HHEQ). The span at 2566–2578 (SAHRHSVPPKRRS) shows a compositional bias: basic residues. Positions 2659-2671 (NTSQSKTSVSQTE) are enriched in polar residues. The region spanning 2996–3102 (AASESIRVNR…VRDDVYQSIL (107 aa)) is the BEACH-type PH domain. The 284-residue stretch at 3126-3409 (QITNFEYLTH…QLFHTAHASR (284 aa)) folds into the BEACH domain. 5 WD repeats span residues 3550–3589 (SQQH…STPS), 3601–3640 (GHTE…YVQS), 3643–3686 (GHKS…VGHV), 3687–3731 (HCRE…PVRE), and 3736–3775 (KSNK…RVKL).

As to quaternary structure, interacts with CPAP, LIP8 and ZNF521. In terms of tissue distribution, expressed in the heart, lung, liver, spleen, brain and in different immune cell types (purified B and T lymphocytes, bone marrow-derived macrophages and dendritic cells).

The protein resides in the cytoplasm. Its function is as follows. Adapter protein that regulates and/or fission of intracellular vesicles such as lysosomes. Might regulate trafficking of effectors involved in exocytosis. In cytotoxic T-cells and natural killer (NK) cells, has role in the regulation of size, number and exocytosis of lytic granules. In macrophages and dendritic cells, regulates phagosome maturation by controlling the conversion of early phagosomal compartments into late phagosomes. In macrophages and dendritic cells, specifically involved in TLR3- and TLR4-induced production of pro-inflammatory cytokines by regulating the endosomal TLR3- TICAM1/TRIF and TLR4- TICAM1/TRIF signaling pathways. The polypeptide is Lysosomal-trafficking regulator (Lyst) (Mus musculus (Mouse)).